A 214-amino-acid chain; its full sequence is Methylthioribulose-1-phosphate dehydratase (214 aa).

Zn(2+)-binding residues include His-103 and His-105.

This sequence belongs to the aldolase class II family. MtnB subfamily. Zn(2+) serves as cofactor.

The enzyme catalyses 5-(methylsulfanyl)-D-ribulose 1-phosphate = 5-methylsulfanyl-2,3-dioxopentyl phosphate + H2O. It participates in amino-acid biosynthesis; L-methionine biosynthesis via salvage pathway; L-methionine from S-methyl-5-thio-alpha-D-ribose 1-phosphate: step 2/6. Its function is as follows. Catalyzes the dehydration of methylthioribulose-1-phosphate (MTRu-1-P) into 2,3-diketo-5-methylthiopentyl-1-phosphate (DK-MTP-1-P). The protein is Methylthioribulose-1-phosphate dehydratase of Granulibacter bethesdensis (strain ATCC BAA-1260 / CGDNIH1).